Consider the following 302-residue polypeptide: Bacteriochlorophyll synthase 33 kDa chain (302 aa).

The next 9 helical transmembrane spans lie at 25 to 45 (ITWF…GIWP), 49 to 69 (WPLV…MSQA), 97 to 117 (WGLY…WMLG), 119 to 139 (WGFG…VEPI), 145 to 165 (GWWG…FTGA), 166 to 186 (AVLS…LYAF), 223 to 243 (LACT…VIWG), 246 to 266 (IHAG…RVLL), and 275 to 295 (WYNG…AFAI).

It is found in the cell membrane. It participates in porphyrin-containing compound metabolism; bacteriochlorophyll biosynthesis (light-independent). In terms of biological role, catalyzes the esterification of bacteriochlorophyllide a by geranylgeraniol-PPi. The polypeptide is Bacteriochlorophyll synthase 33 kDa chain (bchG) (Cereibacter sphaeroides (strain ATCC 17023 / DSM 158 / JCM 6121 / CCUG 31486 / LMG 2827 / NBRC 12203 / NCIMB 8253 / ATH 2.4.1.) (Rhodobacter sphaeroides)).